The chain runs to 424 residues: Bone morphogenetic protein 10 (424 aa).

The N-terminal stretch at 1-21 (MGSLVLTLCALFCLAAYLVSG) is a signal peptide. A propeptide spanning residues 22 to 316 (SPIMNLEQSP…IYDSTARIRR (295 aa)) is cleaved from the precursor. Asparagine 67 and asparagine 131 each carry an N-linked (GlcNAc...) asparagine glycan. Intrachain disulfides connect cysteine 323-cysteine 389, cysteine 352-cysteine 421, and cysteine 356-cysteine 423.

This sequence belongs to the TGF-beta family. As to quaternary structure, homodimer; disulfide-linked. Interacts with FBN1 (via N-terminal domain) and FBN2. Interacts with ENG. In terms of tissue distribution, detected in mammary epithelia (at protein level).

It is found in the secreted. Functionally, required for maintaining the proliferative activity of embryonic cardiomyocytes by preventing premature activation of the negative cell cycle regulator CDKN1C/p57KIP and maintaining the required expression levels of cardiogenic factors such as MEF2C and NKX2-5. Acts as a ligand for ACVRL1/ALK1, BMPR1A/ALK3 and BMPR1B/ALK6, leading to activation of SMAD1, SMAD5 and SMAD8 transcription factors. Inhibits endothelial cell migration and growth. May reduce cell migration and cell matrix adhesion in breast cancer cell lines. In Homo sapiens (Human), this protein is Bone morphogenetic protein 10 (BMP10).